The primary structure comprises 502 residues: ATP synthase subunit alpha (502 aa).

169 to 176 contacts ATP; sequence GDRQTGKT.

The protein belongs to the ATPase alpha/beta chains family. In terms of assembly, F-type ATPases have 2 components, CF(1) - the catalytic core - and CF(0) - the membrane proton channel. CF(1) has five subunits: alpha(3), beta(3), gamma(1), delta(1), epsilon(1). CF(0) has three main subunits: a(1), b(2) and c(9-12). The alpha and beta chains form an alternating ring which encloses part of the gamma chain. CF(1) is attached to CF(0) by a central stalk formed by the gamma and epsilon chains, while a peripheral stalk is formed by the delta and b chains.

The protein resides in the cell membrane. The enzyme catalyses ATP + H2O + 4 H(+)(in) = ADP + phosphate + 5 H(+)(out). Its function is as follows. Produces ATP from ADP in the presence of a proton gradient across the membrane. The alpha chain is a regulatory subunit. The polypeptide is ATP synthase subunit alpha (Bacillus sp. (strain PS3)).